Consider the following 379-residue polypeptide: UDP-4-amino-4-deoxy-L-arabinose--oxoglutarate aminotransferase (379 aa).

K182 bears the N6-(pyridoxal phosphate)lysine mark.

The protein belongs to the DegT/DnrJ/EryC1 family. ArnB subfamily. As to quaternary structure, homodimer. It depends on pyridoxal 5'-phosphate as a cofactor.

The catalysed reaction is UDP-4-amino-4-deoxy-beta-L-arabinose + 2-oxoglutarate = UDP-beta-L-threo-pentopyranos-4-ulose + L-glutamate. It functions in the pathway nucleotide-sugar biosynthesis; UDP-4-deoxy-4-formamido-beta-L-arabinose biosynthesis; UDP-4-deoxy-4-formamido-beta-L-arabinose from UDP-alpha-D-glucuronate: step 2/3. The protein operates within bacterial outer membrane biogenesis; lipopolysaccharide biosynthesis. In terms of biological role, catalyzes the conversion of UDP-4-keto-arabinose (UDP-Ara4O) to UDP-4-amino-4-deoxy-L-arabinose (UDP-L-Ara4N). The modified arabinose is attached to lipid A and is required for resistance to polymyxin and cationic antimicrobial peptides. This Salmonella heidelberg (strain SL476) protein is UDP-4-amino-4-deoxy-L-arabinose--oxoglutarate aminotransferase.